The primary structure comprises 647 residues: MSDLLFPVPESWAKSAWIDNDVYRRMYEQSISDPEGFWGEQAGRLDWFQPWMKVKEGSFDGDVRIRWFSGGKLNVSYNCLDRHLVGRGDQIALLWEGDDPAVSRSLTYRRLHEEVCRFANVMKSLGLRRGDRVTIYLPMIPELAVAMLACTRIGVVHSIVFAGFSPESLRERIRDCQGRVVITADEGLRGGKPLPLKENADEAVGKCPFVEKVIVVRRTGSQIPWTSGRDFDWEGLMQEASADCPPEEMDAEDPLFILYTSGSTGKPKGVLHTTGGYLLFTAMSHQHIFDYHDGDIYWCTADIGWVTGHSYTIYGPLANGATTVMFEGVPNYPDWSRFWRIVDKHGVTILYTAPTAIRALMRQGDEPVRKTFRKTLRLLGTVGEPINPEAWLWYYNVVGEKRCPIVDTWWQTETGGILITPFPGAMALKPGSAARPYFGVKPAIMDSEGRFLEGTGTGNLVITEPWPGMLRTIYGDHQRFLDTYFSTYKGVYFTGDGARRDEDGDYWITGRVDDVINVSGHRLGTAEVESALAAHSAVAEAAVVGFPHEIKGQGIYAYVTLKTDRQPSDALRKELVSWVRREIGAIAAPDFIQWAPGLPKTRSGKIMRRILRKIAADDIADLGDTTTLAEPAVVDDLLKGRLAAAWE.

Residues 189-192 (RGGK), threonine 307, and asparagine 331 contribute to the CoA site. ATP-binding positions include 383 to 385 (GEP), 407 to 412 (DTWWQT), aspartate 496, and arginine 511. Serine 519 lines the CoA pocket. Arginine 522 is an ATP binding site. The Mg(2+) site is built by histidine 535 and valine 538. CoA is bound at residue arginine 580. Lysine 605 carries the post-translational modification N6-acetyllysine.

Belongs to the ATP-dependent AMP-binding enzyme family. Mg(2+) serves as cofactor. Post-translationally, acetylated. Deacetylation by the SIR2-homolog deacetylase activates the enzyme.

The enzyme catalyses acetate + ATP + CoA = acetyl-CoA + AMP + diphosphate. Its function is as follows. Catalyzes the conversion of acetate into acetyl-CoA (AcCoA), an essential intermediate at the junction of anabolic and catabolic pathways. AcsA undergoes a two-step reaction. In the first half reaction, AcsA combines acetate with ATP to form acetyl-adenylate (AcAMP) intermediate. In the second half reaction, it can then transfer the acetyl group from AcAMP to the sulfhydryl group of CoA, forming the product AcCoA. This is Acetyl-coenzyme A synthetase from Syntrophus aciditrophicus (strain SB).